Consider the following 702-residue polypeptide: Elongation factor G (702 aa).

Residues 8–290 (CQYRNIGISA…AIIEYLPAPN (283 aa)) form the tr-type G domain. GTP is bound by residues 17–24 (AHIDAGKT), 88–92 (DTPGH), and 142–145 (NKMD).

Belongs to the TRAFAC class translation factor GTPase superfamily. Classic translation factor GTPase family. EF-G/EF-2 subfamily.

The protein resides in the cytoplasm. Its function is as follows. Catalyzes the GTP-dependent ribosomal translocation step during translation elongation. During this step, the ribosome changes from the pre-translocational (PRE) to the post-translocational (POST) state as the newly formed A-site-bound peptidyl-tRNA and P-site-bound deacylated tRNA move to the P and E sites, respectively. Catalyzes the coordinated movement of the two tRNA molecules, the mRNA and conformational changes in the ribosome. The protein is Elongation factor G of Buchnera aphidicola subsp. Schizaphis graminum (strain Sg).